A 386-amino-acid polypeptide reads, in one-letter code: Lipid-A-disaccharide synthase (386 aa).

It belongs to the LpxB family.

The enzyme catalyses a lipid X + a UDP-2-N,3-O-bis[(3R)-3-hydroxyacyl]-alpha-D-glucosamine = a lipid A disaccharide + UDP + H(+). The protein operates within bacterial outer membrane biogenesis; LPS lipid A biosynthesis. In terms of biological role, condensation of UDP-2,3-diacylglucosamine and 2,3-diacylglucosamine-1-phosphate to form lipid A disaccharide, a precursor of lipid A, a phosphorylated glycolipid that anchors the lipopolysaccharide to the outer membrane of the cell. This Chromohalobacter salexigens (strain ATCC BAA-138 / DSM 3043 / CIP 106854 / NCIMB 13768 / 1H11) protein is Lipid-A-disaccharide synthase.